Consider the following 554-residue polypeptide: Hydroxylamine reductase (554 aa).

Residues Cys-3, Cys-6, Cys-18, and Cys-25 each contribute to the [2Fe-2S] cluster site. Hybrid [4Fe-2O-2S] cluster is bound by residues His-252, Glu-276, Cys-320, Cys-408, Cys-436, Cys-461, Glu-495, and Lys-497. Cys-408 is modified (cysteine persulfide).

The protein belongs to the HCP family. The cofactor is [2Fe-2S] cluster. It depends on hybrid [4Fe-2O-2S] cluster as a cofactor.

It localises to the cytoplasm. It catalyses the reaction A + NH4(+) + H2O = hydroxylamine + AH2 + H(+). Functionally, catalyzes the reduction of hydroxylamine to form NH(3) and H(2)O. The chain is Hydroxylamine reductase from Shewanella baltica (strain OS185).